A 292-amino-acid chain; its full sequence is Ribosomal RNA small subunit methyltransferase H (292 aa).

Residues 32–34 (GGH), Asp-51, Leu-87, Asp-101, and Gln-108 contribute to the S-adenosyl-L-methionine site.

This sequence belongs to the methyltransferase superfamily. RsmH family.

The protein resides in the cytoplasm. The enzyme catalyses cytidine(1402) in 16S rRNA + S-adenosyl-L-methionine = N(4)-methylcytidine(1402) in 16S rRNA + S-adenosyl-L-homocysteine + H(+). In terms of biological role, specifically methylates the N4 position of cytidine in position 1402 (C1402) of 16S rRNA. This is Ribosomal RNA small subunit methyltransferase H from Pseudothermotoga lettingae (strain ATCC BAA-301 / DSM 14385 / NBRC 107922 / TMO) (Thermotoga lettingae).